A 95-amino-acid chain; its full sequence is Small ribosomal subunit protein bS6 (95 aa).

This sequence belongs to the bacterial ribosomal protein bS6 family.

In terms of biological role, binds together with bS18 to 16S ribosomal RNA. This chain is Small ribosomal subunit protein bS6, found in Geobacillus sp. (strain WCH70).